We begin with the raw amino-acid sequence, 371 residues long: Vasopressin V2 receptor (371 aa).

Residues 1 to 27 (MILVSTTSAVPGALSSPSSPSNSSQEE) form a disordered region. The Extracellular segment spans residues 1 to 38 (MILVSTTSAVPGALSSPSSPSNSSQEELLDDRDPLLVR). Residues 15–24 (SSPSSPSNSS) are compositionally biased toward low complexity. Residue Asn-22 is glycosylated (N-linked (GlcNAc...) asparagine). A helical membrane pass occupies residues 39 to 63 (AELALLSTIFVAVALSNGLVLGALI). The Cytoplasmic portion of the chain corresponds to 64–77 (RRGRRGRWAPMHVF). A helical membrane pass occupies residues 78–98 (ISHLCLADLAVALFQVLPQLA). The Extracellular portion of the chain corresponds to 99–113 (WDATDRFHGPDALCR). Residues 114–135 (AVKYLQMVGMYASSYMILAMTL) form a helical membrane-spanning segment. At 136-159 (DRHRAICRPMLAYRHGGGARWNRP) the chain is on the cytoplasmic side. Residues 160–180 (VLVAWAFSLLLSLPQLFIFAQ) form a helical membrane-spanning segment. Topologically, residues 181–200 (RDVGNGSGVFDCWARFAEPW) are extracellular. A glycan (N-linked (GlcNAc...) asparagine) is linked at Asn-185. The chain crosses the membrane as a helical span at residues 201–220 (GLRAYVTWIALMVFVAPALG). The Cytoplasmic segment spans residues 221 to 271 (IAACQVLIFREIHASLVPGPSERAGRRRRGHRTGSPSEGAHVSAAMAKTVR). The interval 240–259 (PSERAGRRRRGHRTGSPSEG) is disordered. A helical membrane pass occupies residues 272–293 (MTLVIVIVYVLCWAPFFLVQLW). The Extracellular portion of the chain corresponds to 294–308 (AAWDPEAPLERPPFV). A helical transmembrane segment spans residues 309-328 (LLMLLASLNSCTNPWIYASF). At 329–371 (SSSVSSELRSLLCCAQRHTTHSLGPQDESCATASSSLMKDTPS) the chain is on the cytoplasmic side. 2 S-palmitoyl cysteine lipidation sites follow: Cys-341 and Cys-342. The tract at residues 349–371 (HSLGPQDESCATASSSLMKDTPS) is disordered. Positions 357–371 (SCATASSSLMKDTPS) are enriched in polar residues.

Belongs to the G-protein coupled receptor 1 family. Vasopressin/oxytocin receptor subfamily. As to quaternary structure, interacts with ARRDC4. Identified in a complex containing at least ARRDC4, V2R and HGS. Interacts with TMEM147. In terms of tissue distribution, highly expressed in kidney (at protein level) and moderately expressed in liver (at protein level). No or extremely low expression in left ventricule, muscle, bone and brain (at protein level).

The protein localises to the cell membrane. Receptor for arginine vasopressin. The activity of this receptor is mediated by G proteins which activate adenylate cyclase. Involved in renal water reabsorption. This chain is Vasopressin V2 receptor (Avpr2), found in Mus musculus (Mouse).